The primary structure comprises 359 residues: Fructose-1,6-bisphosphatase class 1 (359 aa).

Mg(2+)-binding residues include Glu-95, Asp-117, Leu-119, and Asp-120. Substrate-binding positions include 120 to 123 (DGSS) and Asn-212. Glu-284 contacts Mg(2+).

Belongs to the FBPase class 1 family. Homotetramer. The cofactor is Mg(2+).

It localises to the cytoplasm. It catalyses the reaction beta-D-fructose 1,6-bisphosphate + H2O = beta-D-fructose 6-phosphate + phosphate. The protein operates within carbohydrate biosynthesis; gluconeogenesis. The polypeptide is Fructose-1,6-bisphosphatase class 1 (Hydrogenophilus thermoluteolus (Pseudomonas hydrogenothermophila)).